A 92-amino-acid chain; its full sequence is Signal recognition particle 19 kDa protein (92 aa).

It belongs to the SRP19 family. Part of the signal recognition particle protein translocation system, which is composed of SRP and FtsY. Archaeal SRP consists of a 7S RNA molecule of 300 nucleotides and two protein subunits: SRP54 and SRP19.

The protein localises to the cytoplasm. In terms of biological role, involved in targeting and insertion of nascent membrane proteins into the cytoplasmic membrane. Binds directly to 7S RNA and mediates binding of the 54 kDa subunit of the SRP. The protein is Signal recognition particle 19 kDa protein of Haloferax volcanii (strain ATCC 29605 / DSM 3757 / JCM 8879 / NBRC 14742 / NCIMB 2012 / VKM B-1768 / DS2) (Halobacterium volcanii).